Reading from the N-terminus, the 1045-residue chain is Desmoglein-1 (1045 aa).

The N-terminal stretch at 1–23 (MNWPFFRTAAVLFIFLVVLEVNS) is a signal peptide. A propeptide spanning residues 24 to 49 (EFRIQVRDYNTKNGTIKWHSIRRQKR) is cleaved from the precursor. Asn-36, Asn-110, and Asn-180 each carry an N-linked (GlcNAc...) asparagine glycan. Cadherin domains are found at residues 50–158 (EWIK…PVFS), 159–270 (MSTF…PYME), 271–385 (LPSN…GSVF), and 386–496 (RPGS…TDGA). The Extracellular segment spans residues 50–546 (EWIKFAAACR…HPLDNVHFGP (497 aa)). The helical transmembrane segment at 547–567 (AGIGLLIMGFLVLGLVPFLLM) threads the bilayer. The Cytoplasmic segment spans residues 568–1045 (YCDCGGAPGG…TKYSTVQYTK (478 aa)). 5 Desmoglein repeat repeats span residues 814-840 (TYPS…TMTE), 841-870 (SYTT…ERVV), 871-900 (GPIS…ERVI), 901-928 (APNS…ERVI), and 929-957 (RPTS…ERVV). Positions 1019 to 1045 (FSNTLGSASPTTTRSRITKYSTVQYTK) are disordered. Residues 1020 to 1045 (SNTLGSASPTTTRSRITKYSTVQYTK) show a composition bias toward polar residues.

In terms of assembly, binds to JUP/plakoglobin. Interacts with PKP2. Interacts with DSC3; there is evidence to suggest that the interaction promotes cell-cell adhesion of keratinocytes.

The protein localises to the cell membrane. Its subcellular location is the cell junction. The protein resides in the desmosome. It is found in the cytoplasm. It localises to the nucleus. Its function is as follows. Component of intercellular desmosome junctions. Involved in the interaction of plaque proteins and intermediate filaments mediating cell-cell adhesion. This Sus scrofa (Pig) protein is Desmoglein-1 (DSG1).